Here is a 139-residue protein sequence, read N- to C-terminus: Hydrogenase maturation factor HypA (139 aa).

Histidine 2 contacts Ni(2+). Zn(2+)-binding residues include cysteine 73, cysteine 76, cysteine 110, and cysteine 113.

It belongs to the HypA/HybF family.

Functionally, involved in the maturation of [NiFe] hydrogenases. Required for nickel insertion into the metal center of the hydrogenase. This Pyrococcus furiosus (strain ATCC 43587 / DSM 3638 / JCM 8422 / Vc1) protein is Hydrogenase maturation factor HypA.